The chain runs to 1180 residues: Pyruvate carboxylase 2 (1180 aa).

Ser2 is subject to N-acetylserine. Positions 19–471 constitute a Biotin carboxylation domain; sequence EKNKILVANR…WTTFIDDTPQ (453 aa). ATP contacts are provided by Lys137, Glu221, and His256. The ATP-grasp domain maps to 141–338; sequence RHLAARANVP…IVSAQIQIAA (198 aa). Arg313 is an active-site residue. Positions 558 to 825 constitute a Pyruvate carboxyltransferase domain; sequence TLLMDTTWRD…DTGINVEHVR (268 aa). Residues 566–570 and Arg639 contribute to the substrate site; that span reads RDAHQ. Asp567 serves as a coordination point for a divalent metal cation. A divalent metal cation-binding residues include Lys735, His765, and His767. Residue Lys735 is modified to N6-carboxylysine. Thr899 serves as a coordination point for substrate. A Biotinyl-binding domain is found at 1095–1170; sequence KADVHDTHQI…DASDLLVVLE (76 aa). The residue at position 1136 (Lys1136) is an N6-biotinyllysine.

Homotetramer. The cofactor is biotin. Requires Zn(2+) as cofactor.

The protein localises to the cytoplasm. It catalyses the reaction hydrogencarbonate + pyruvate + ATP = oxaloacetate + ADP + phosphate + H(+). The protein operates within carbohydrate biosynthesis; gluconeogenesis. Its function is as follows. Pyruvate carboxylase catalyzes a 2-step reaction, involving the ATP-dependent carboxylation of the covalently attached biotin in the first step and the transfer of the carboxyl group to pyruvate in the second. The chain is Pyruvate carboxylase 2 (PYC2) from Saccharomyces cerevisiae (strain ATCC 204508 / S288c) (Baker's yeast).